The primary structure comprises 499 residues: Probable mitochondrial-processing peptidase subunit alpha-2, chloroplastic/mitochondrial (499 aa).

It belongs to the peptidase M16 family. In terms of assembly, heterodimer of alpha and beta subunits, forming the mitochondrial processing protease (MPP) in which subunit alpha is involved in substrate recognition and binding and subunit beta is the catalytic subunit. Component of the ubiquinol-cytochrome c oxidoreductase (cytochrome b-c1 complex, complex III, CIII), a multisubunit enzyme composed of 10 subunits. The complex is composed of 3 respiratory subunits cytochrome b (MT-CYB), cytochrome c1 (CYC1-1 or CYC1-2) and Rieske protein (UCR1-1 or UCR1-2), 2 core protein subunits MPPalpha1 (or MPPalpha2) and MPPB, and 5 low-molecular weight protein subunits QCR7-1 (or QCR7-2), UCRQ-1 (or UCRQ-2), QCR9, UCRY and probably QCR6-1 (or QCR6-2). The complex exists as an obligatory dimer and forms supercomplexes (SCs) in the inner mitochondrial membrane with NADH-ubiquinone oxidoreductase (complex I, CI), resulting in different assemblies (supercomplexes SCI(1)III(2) and SCI(2)III(4)). Interacts with TIM23-2.

Its subcellular location is the plastid. It is found in the chloroplast stroma. It localises to the mitochondrion matrix. The protein resides in the mitochondrion inner membrane. Substrate recognition and binding subunit of the essential mitochondrial processing protease (MPP), which cleaves the mitochondrial sequence off newly imported precursors proteins. Its function is as follows. Component of the ubiquinol-cytochrome c oxidoreductase, a multisubunit transmembrane complex that is part of the mitochondrial electron transport chain which drives oxidative phosphorylation. The respiratory chain contains 3 multisubunit complexes succinate dehydrogenase (complex II, CII), ubiquinol-cytochrome c oxidoreductase (cytochrome b-c1 complex, complex III, CIII) and cytochrome c oxidase (complex IV, CIV), that cooperate to transfer electrons derived from NADH and succinate to molecular oxygen, creating an electrochemical gradient over the inner membrane that drives transmembrane transport and the ATP synthase. The cytochrome b-c1 complex catalyzes electron transfer from ubiquinol to cytochrome c, linking this redox reaction to translocation of protons across the mitochondrial inner membrane, with protons being carried across the membrane as hydrogens on the quinol. In the process called Q cycle, 2 protons are consumed from the matrix, 4 protons are released into the intermembrane space and 2 electrons are passed to cytochrome c. This chain is Probable mitochondrial-processing peptidase subunit alpha-2, chloroplastic/mitochondrial (MPPalpha2), found in Arabidopsis thaliana (Mouse-ear cress).